Reading from the N-terminus, the 435-residue chain is MEEKDQRQRNIEHFKIKKLMTRLRNTRGSGTSMVSLIIPPKKQINDSTKLISDEFSKATNIKDRVNRQSVQDAMVSALQRLKLYQRTPNNGLILYCGKVLNEEGKEIKLLIDFEPYKPINTSLYFCDSKFHVDELGSLLETDPPFGFIVMDGQGALYANLQGNTKTVLNKFSVELPKKHGRGGQSSVRFARLRVEKRHNYLRKVCEVATQTFISQDKINVQGLVLAGSGDFKNELSTTQMFDPRLACKIIKIVDVSYGGENGLNQAIELAQESLTNVKFVQEKNVISKFFDCIAIDSGTVVYGVQDTMQLLLDGVIENILCFEELTTLRVTRKNKVTEQITHIFIPPNELNNPKHFKDGEHELEKIEVENLTEWLAEHYSEFGAELYFITDKSAEGCQFVKGFSGIGGFLRYKVDLEHIVNPNDEYNYEEEEGFI.

The protein belongs to the eukaryotic release factor 1 family. As to quaternary structure, heterodimer of two subunits, one of which binds GTP.

Its subcellular location is the cytoplasm. Its function is as follows. Directs the termination of nascent peptide synthesis (translation) in response to the termination codon UGA. In T.thermophila UAA and UAG codes for glutamine. The protein is Eukaryotic peptide chain release factor subunit 1 (ERF1) of Tetrahymena thermophila.